The following is a 101-amino-acid chain: UPF0473 protein spr0177 (101 aa).

Belongs to the UPF0473 family.

This Streptococcus pneumoniae (strain ATCC BAA-255 / R6) protein is UPF0473 protein spr0177.